We begin with the raw amino-acid sequence, 478 residues long: Dynein regulatory complex subunit 4 (478 aa).

The segment covering 1–12 (MAPKKKGKKGKA) has biased composition (basic residues). Positions 1–29 (MAPKKKGKKGKAKGTAIVDGVAPEDMTKE) are disordered. The segment at 1-114 (MAPKKKGKKG…LLYEHQNNLA (114 aa)) is regulates microtubule-binding. 2 coiled-coil regions span residues 24–207 (EDMT…RKTE) and 242–426 (LNNL…ELAR). Positions 115 to 258 (EVKAEGTVVM…NSLKEQMEDM (144 aa)) are microtubule-binding. The interaction with SMO stretch occupies residues 357–478 (QQKTGFKNLL…GPAGLVGAPT (122 aa)).

This sequence belongs to the DRC4 family. Component of the nexin-dynein regulatory complex (N-DRC). Interacts with microtubules. Interacts with SMO. Interacts (via coiled-coil domains) with RAB3B (in GTP-bound form). Interacts with DRC1. Interacts with DRC7. As to expression, highly expressed in adult testes and lung. Weakly or not expressed in other tested tissues.

The protein resides in the cytoplasm. Its subcellular location is the cytoskeleton. It is found in the cell projection. It localises to the cilium. The protein localises to the flagellum. The protein resides in the cilium axoneme. Its subcellular location is the cilium basal body. It is found in the golgi apparatus. It localises to the flagellum axoneme. In terms of biological role, component of the nexin-dynein regulatory complex (N-DRC), a key regulator of ciliary/flagellar motility which maintains the alignment and integrity of the distal axoneme and regulates microtubule sliding in motile axonemes. Plays an important role in the assembly of the N-DRC linker. Plays dual roles at both the primary (or non-motile) cilia to regulate hedgehog signaling and in motile cilia to coordinate cilia movement. Required for proper motile cilia functioning. Positively regulates ciliary smoothened (SMO)-dependent Hedgehog (Hh) signaling pathway by facilitating the trafficking of SMO into the cilium and the stimulation of SMO activity in a GRK2-dependent manner. May play a role in the spermatozoa motility. The chain is Dynein regulatory complex subunit 4 (Gas8) from Mus musculus (Mouse).